The primary structure comprises 734 residues: Photosystem I P700 chlorophyll a apoprotein A2 (734 aa).

8 helical membrane passes run 46–69 (IFAS…FHVA), 135–158 (LYTG…LHLQ), 175–199 (LNHH…HVAI), 273–291 (IAHH…GHMY), 330–353 (LHFQ…QHMY), 369–395 (AALY…IFFI), 417–439 (AIIS…LYVH), and 517–535 (FLVH…LILV). [4Fe-4S] cluster is bound by residues C559 and C568. A run of 2 helical transmembrane segments spans residues 575–596 (AFYL…YWHW) and 643–665 (LSVW…MFLI). 3 residues coordinate chlorophyll a: H654, M662, and Y670. W671 contributes to the phylloquinone binding site. Residues 707–727 (LVGLAHFSVGYIFTYAAFLIA) form a helical membrane-spanning segment.

This sequence belongs to the PsaA/PsaB family. The PsaA/B heterodimer binds the P700 chlorophyll special pair and subsequent electron acceptors. PSI consists of a core antenna complex that captures photons, and an electron transfer chain that converts photonic excitation into a charge separation. The eukaryotic PSI reaction center is composed of at least 11 subunits. P700 is a chlorophyll a/chlorophyll a' dimer, A0 is one or more chlorophyll a, A1 is one or both phylloquinones and FX is a shared 4Fe-4S iron-sulfur center. is required as a cofactor.

Its subcellular location is the plastid. The protein resides in the chloroplast thylakoid membrane. The catalysed reaction is reduced [plastocyanin] + hnu + oxidized [2Fe-2S]-[ferredoxin] = oxidized [plastocyanin] + reduced [2Fe-2S]-[ferredoxin]. Its function is as follows. PsaA and PsaB bind P700, the primary electron donor of photosystem I (PSI), as well as the electron acceptors A0, A1 and FX. PSI is a plastocyanin-ferredoxin oxidoreductase, converting photonic excitation into a charge separation, which transfers an electron from the donor P700 chlorophyll pair to the spectroscopically characterized acceptors A0, A1, FX, FA and FB in turn. Oxidized P700 is reduced on the lumenal side of the thylakoid membrane by plastocyanin. In Nicotiana tabacum (Common tobacco), this protein is Photosystem I P700 chlorophyll a apoprotein A2.